Reading from the N-terminus, the 327-residue chain is DNA-directed RNA polymerase subunit alpha (327 aa).

The alpha N-terminal domain (alpha-NTD) stretch occupies residues 1–231 (MIYQMQMPAK…DHVLLFADFS (231 aa)). Positions 247-327 (DEFETMRRLL…GMDITRYQMK (81 aa)) are alpha C-terminal domain (alpha-CTD).

It belongs to the RNA polymerase alpha chain family. Homodimer. The RNAP catalytic core consists of 2 alpha, 1 beta, 1 beta' and 1 omega subunit. When a sigma factor is associated with the core the holoenzyme is formed, which can initiate transcription.

The enzyme catalyses RNA(n) + a ribonucleoside 5'-triphosphate = RNA(n+1) + diphosphate. In terms of biological role, DNA-dependent RNA polymerase catalyzes the transcription of DNA into RNA using the four ribonucleoside triphosphates as substrates. The chain is DNA-directed RNA polymerase subunit alpha from Chlorobium chlorochromatii (strain CaD3).